We begin with the raw amino-acid sequence, 131 residues long: MRIEDEIKNIIEKKDYDFWEFLKKAYENNIKLDIGHFILLNILIGVNDLYHKLSEKFGEEEARKILERNKIFAKNSDFISGEFLKDYIDRKSRVAVHNRIKDLKTLGFKIESKSGPFGGYKIVGYPEWFKK.

This is an uncharacterized protein from Methanocaldococcus jannaschii (strain ATCC 43067 / DSM 2661 / JAL-1 / JCM 10045 / NBRC 100440) (Methanococcus jannaschii).